The chain runs to 543 residues: Chaperonin GroEL (543 aa).

Residues 29-32, 86-90, G413, 477-479, and D493 each bind ATP; these read TLGP, DGTTT, and DAL.

Belongs to the chaperonin (HSP60) family. In terms of assembly, forms a cylinder of 14 subunits composed of two heptameric rings stacked back-to-back. Interacts with the co-chaperonin GroES.

It localises to the cytoplasm. It carries out the reaction ATP + H2O + a folded polypeptide = ADP + phosphate + an unfolded polypeptide.. Together with its co-chaperonin GroES, plays an essential role in assisting protein folding. The GroEL-GroES system forms a nano-cage that allows encapsulation of the non-native substrate proteins and provides a physical environment optimized to promote and accelerate protein folding. The chain is Chaperonin GroEL from Clostridium novyi (strain NT).